A 595-amino-acid chain; its full sequence is Actin-histidine N-methyltransferase (595 aa).

Residues methionine 1–proline 22 form a disordered region. Polar residues predominate over residues glutamine 10–valine 20. Residues arginine 75, glutamate 104 to phenylalanine 106, arginine 254, aspartate 275 to histidine 279, and serine 325 to phenylalanine 327 each bind S-adenosyl-L-methionine. The SET domain occupies glutamate 94–glycine 314. Phosphoserine is present on serine 513. Polar residues predominate over residues glutamate 549–glutamine 572. The interval glutamate 549 to glutamate 595 is disordered. Residues glutamate 573 to lysine 583 are compositionally biased toward basic and acidic residues. Positions glycine 584–glutamate 595 are enriched in polar residues.

It belongs to the class V-like SAM-binding methyltransferase superfamily. SETD3 actin-histidine methyltransferase family. Interacts with MYOD1. In terms of processing, phosphorylated by GSK3B, which is required for recognition by the SCF(FBXW7) complex and subsequent degradation. Ubiquitinated by the SCF(FBXW7) complex following phosphorylation by GSK3B, leading to its degradation by the proteasome.

The protein resides in the cytoplasm. It localises to the nucleus. The catalysed reaction is L-histidyl-[protein] + S-adenosyl-L-methionine = N(tele)-methyl-L-histidyl-[protein] + S-adenosyl-L-homocysteine + H(+). In terms of biological role, protein-histidine N-methyltransferase that specifically mediates 3-methylhistidine (tele-methylhistidine) methylation of actin at 'His-73'. Histidine methylation of actin is required for smooth muscle contraction of the laboring uterus during delivery. Does not have protein-lysine N-methyltransferase activity and probably only catalyzes histidine methylation of actin. In Papio anubis (Olive baboon), this protein is Actin-histidine N-methyltransferase.